The primary structure comprises 356 residues: Ferredoxin--NADP reductase (356 aa).

FAD is bound by residues Thr25, Glu44, Gln52, Tyr57, Val97, Phe132, Asp298, and Ser339.

Belongs to the ferredoxin--NADP reductase type 2 family. In terms of assembly, homodimer. FAD is required as a cofactor.

The catalysed reaction is 2 reduced [2Fe-2S]-[ferredoxin] + NADP(+) + H(+) = 2 oxidized [2Fe-2S]-[ferredoxin] + NADPH. The sequence is that of Ferredoxin--NADP reductase from Chlorobaculum parvum (strain DSM 263 / NCIMB 8327) (Chlorobium vibrioforme subsp. thiosulfatophilum).